A 262-amino-acid chain; its full sequence is Shikimate dehydrogenase (NADP(+)) (262 aa).

Residues 15 to 17 (SRS) and Thr62 each bind shikimate. Residue Lys66 is the Proton acceptor of the active site. Glu78 provides a ligand contact to NADP(+). Residues Asn87 and Asp102 each coordinate shikimate. NADP(+) contacts are provided by residues 126 to 130 (GAGGA), 150 to 155 (NRTQQR), and Met214. Tyr216 provides a ligand contact to shikimate. Gly236 contacts NADP(+).

Belongs to the shikimate dehydrogenase family. Homodimer.

The enzyme catalyses shikimate + NADP(+) = 3-dehydroshikimate + NADPH + H(+). The protein operates within metabolic intermediate biosynthesis; chorismate biosynthesis; chorismate from D-erythrose 4-phosphate and phosphoenolpyruvate: step 4/7. Its function is as follows. Involved in the biosynthesis of the chorismate, which leads to the biosynthesis of aromatic amino acids. Catalyzes the reversible NADPH linked reduction of 3-dehydroshikimate (DHSA) to yield shikimate (SA). This Acinetobacter baylyi (strain ATCC 33305 / BD413 / ADP1) protein is Shikimate dehydrogenase (NADP(+)).